Consider the following 173-residue polypeptide: Large ribosomal subunit protein uL10 (173 aa).

This sequence belongs to the universal ribosomal protein uL10 family. In terms of assembly, part of the ribosomal stalk of the 50S ribosomal subunit. The N-terminus interacts with L11 and the large rRNA to form the base of the stalk. The C-terminus forms an elongated spine to which L12 dimers bind in a sequential fashion forming a multimeric L10(L12)X complex.

Its function is as follows. Forms part of the ribosomal stalk, playing a central role in the interaction of the ribosome with GTP-bound translation factors. The chain is Large ribosomal subunit protein uL10 from Maridesulfovibrio salexigens (strain ATCC 14822 / DSM 2638 / NCIMB 8403 / VKM B-1763) (Desulfovibrio salexigens).